Consider the following 114-residue polypeptide: Large ribosomal subunit protein bL19 (114 aa).

The protein belongs to the bacterial ribosomal protein bL19 family.

Its function is as follows. This protein is located at the 30S-50S ribosomal subunit interface and may play a role in the structure and function of the aminoacyl-tRNA binding site. In Clavibacter michiganensis subsp. michiganensis (strain NCPPB 382), this protein is Large ribosomal subunit protein bL19.